Consider the following 126-residue polypeptide: Glycine cleavage system H protein (126 aa).

One can recognise a Lipoyl-binding domain in the interval 21 to 103 (TVTVGISDHA…YESGWIARIK (83 aa)). Lysine 62 is subject to N6-lipoyllysine.

This sequence belongs to the GcvH family. The glycine cleavage system is composed of four proteins: P, T, L and H. (R)-lipoate serves as cofactor.

The glycine cleavage system catalyzes the degradation of glycine. The H protein shuttles the methylamine group of glycine from the P protein to the T protein. The protein is Glycine cleavage system H protein of Aliivibrio fischeri (strain ATCC 700601 / ES114) (Vibrio fischeri).